The sequence spans 47 residues: Diuretic hormone 2 (47 aa).

This sequence belongs to the sauvagine/corticotropin-releasing factor/urotensin I family.

Its subcellular location is the secreted. Its function is as follows. Stimulates fluid secretion by the Malpighian tubules. Increases cyclic AMP production in Malpighian tubules. In Tenebrio molitor (Yellow mealworm beetle), this protein is Diuretic hormone 2.